The following is a 560-amino-acid chain: MVLLKEPVQPLPRSSLLYNNASNSSSRIKETRKVKLLYNPLTKRQILNNFEILATLGNGQYGKVKLARDLGTGALVAIKILNRFEKRSGYSLQLKVENPRVNQEIEVMKRCHHENVVELYEILNDPESTKVYLVLEYCSRGPVKWCPENKMEIKAVGPSILTFQQSRKVVLDVVSGLEYLHSQGITHRDIKPSNLLISSNGTVKISDFGVAMSTATGSTNIQSSHEQLLKSRALGTPAFFAPELCSTEKEYSCSSAIDIWSLGVTIYCLLFGKLPFNANSGLELFDSIINKPLEFPSYEEMLNGATSGITMEEYTDAKDLLKKLLQKDPDKRIKLADIKVHPFMCHYGKSDAASVLTNLETFHELKVSPPSSCKRVELVSLPVNSSFASLDSVYMENFDHNNLRTGADRNSTYSPSIYDANTLSPSAYHNIGSRESSYSSFSSFTSSTAFASQISIQDAPAIGDQQCLIGESGSSLRVNSCEFPQYTTMSPVGEYPFESTEASLSSTLTPVGNVPQRIKAHLVEGKSNSKDDLRIEADASLVFEASDAQRTRRRMSLYKL.

One can recognise a Protein kinase domain in the interval 50 to 344 (FEILATLGNG…LADIKVHPFM (295 aa)). ATP is bound by residues 56-64 (LGNGQYGKV) and K79. The Proton acceptor role is filled by D189.

It belongs to the protein kinase superfamily. Ser/Thr protein kinase family. In terms of processing, autophosphorylated.

The enzyme catalyses L-seryl-[protein] + ATP = O-phospho-L-seryl-[protein] + ADP + H(+). It carries out the reaction L-threonyl-[protein] + ATP = O-phospho-L-threonyl-[protein] + ADP + H(+). Functionally, one of the three SNF1 protein kinases (with SAK1 and ELM1) which are required for growth on nonfermentable carbon sources and nonpreferred sugars and for response to environmental stress. Activates SNF1 by phosphorylation of its activation-loop 'Thr-210'. Required for the regulation by SNF1 of the transcription of a large set of genes, the modification the activity of metabolic enzymes, and the control of various nutrient-responsive cellular developmental processes. Also phosphorylates GAL83, MIG1 and SIP2. This chain is Serine/threonine-protein kinase TOS3 (TOS3), found in Saccharomyces cerevisiae (strain ATCC 204508 / S288c) (Baker's yeast).